We begin with the raw amino-acid sequence, 240 residues long: Probable alpha-aspartyl dipeptidase (240 aa).

Active-site charge relay system residues include Ser125, Asp140, and His162.

It belongs to the peptidase S51 family.

Its subcellular location is the cytoplasm. The catalysed reaction is Dipeptidase E catalyzes the hydrolysis of dipeptides Asp-|-Xaa. It does not act on peptides with N-terminal Glu, Asn or Gln, nor does it cleave isoaspartyl peptides.. Functionally, hydrolyzes dipeptides containing N-terminal aspartate residues. The polypeptide is Probable alpha-aspartyl dipeptidase (Drosophila melanogaster (Fruit fly)).